The chain runs to 434 residues: Ribosomal protein uS12 methylthiotransferase RimO (434 aa).

Residues 6 to 122 (NRVFLLSLGC…ILTAIGARYR (117 aa)) enclose the MTTase N-terminal domain. Residues cysteine 15, cysteine 51, cysteine 85, cysteine 146, cysteine 150, and cysteine 153 each contribute to the [4Fe-4S] cluster site. The 230-residue stretch at 132–361 (TAPGHTSFLK…MELQEGISEE (230 aa)) folds into the Radical SAM core domain. The TRAM domain maps to 364-431 (KRLEGREIAV…PYELFGTVLK (68 aa)).

Belongs to the methylthiotransferase family. RimO subfamily. [4Fe-4S] cluster is required as a cofactor.

The protein resides in the cytoplasm. It carries out the reaction L-aspartate(89)-[ribosomal protein uS12]-hydrogen + (sulfur carrier)-SH + AH2 + 2 S-adenosyl-L-methionine = 3-methylsulfanyl-L-aspartate(89)-[ribosomal protein uS12]-hydrogen + (sulfur carrier)-H + 5'-deoxyadenosine + L-methionine + A + S-adenosyl-L-homocysteine + 2 H(+). Its function is as follows. Catalyzes the methylthiolation of an aspartic acid residue of ribosomal protein uS12. In Chlorobium phaeovibrioides (strain DSM 265 / 1930) (Prosthecochloris vibrioformis (strain DSM 265)), this protein is Ribosomal protein uS12 methylthiotransferase RimO.